Reading from the N-terminus, the 1233-residue chain is ATP-dependent helicase/nuclease subunit A (1233 aa).

One can recognise a UvrD-like helicase ATP-binding domain in the interval 3-474 (TKWTEEQKQA…ILLYKNFRSR (472 aa)). 24 to 31 (AAAGSGKT) lines the ATP pocket. In terms of domain architecture, UvrD-like helicase C-terminal spans 518-809 (VTGGAVELHL…RIMSIHKSKG (292 aa)). Residues 533–555 (VEEEVEEKEEEKNEEKDFEEEEE) form a disordered region.

It belongs to the helicase family. AddA subfamily. As to quaternary structure, heterodimer of AddA and AddB/RexB. Mg(2+) is required as a cofactor.

It catalyses the reaction Couples ATP hydrolysis with the unwinding of duplex DNA by translocating in the 3'-5' direction.. The enzyme catalyses ATP + H2O = ADP + phosphate + H(+). The heterodimer acts as both an ATP-dependent DNA helicase and an ATP-dependent, dual-direction single-stranded exonuclease. Recognizes the chi site generating a DNA molecule suitable for the initiation of homologous recombination. The AddA nuclease domain is required for chi fragment generation; this subunit has the helicase and 3' -&gt; 5' nuclease activities. The sequence is that of ATP-dependent helicase/nuclease subunit A from Thermoanaerobacter sp. (strain X514).